The following is a 113-amino-acid chain: MGFFSYLGLVLVGLASLTSLASLANLQDFSTDNPLEEELRCWCQYVKNCRFCWACQDGFCKNKVLKNMPSVQEHSYPMEHCMIHRQCKYVRDGPIFQVECMMQTCDAIHLLNA.

Residues 1–31 form the signal peptide; sequence MGFFSYLGLVLVGLASLTSLASLANLQDFST.

The protein belongs to the asfivirus MGF 110 family.

Functionally, plays a role in virus cell tropism, and may be required for efficient virus replication in macrophages. The sequence is that of Protein MGF 110-2L from African swine fever virus (isolate Pig/Kenya/KEN-50/1950) (ASFV).